Reading from the N-terminus, the 994-residue chain is Alanine--tRNA ligase, chloroplastic/mitochondrial (994 aa).

Positions 1 to 29 (MGGLKLPPQTLHGIHGGRRPLTAPSSKPS) are disordered. Residues His672, His676, Cys774, and His778 each contribute to the Zn(2+) site.

Belongs to the class-II aminoacyl-tRNA synthetase family. As to quaternary structure, monomer. The cofactor is Zn(2+).

Its subcellular location is the plastid. The protein resides in the chloroplast. It localises to the mitochondrion. The enzyme catalyses tRNA(Ala) + L-alanine + ATP = L-alanyl-tRNA(Ala) + AMP + diphosphate. In terms of biological role, catalyzes the attachment of alanine to tRNA(Ala) in a two-step reaction: alanine is first activated by ATP to form Ala-AMP and then transferred to the acceptor end of tRNA(Ala). Also edits incorrectly charged tRNA(Ala) via its editing domain. In Populus trichocarpa (Western balsam poplar), this protein is Alanine--tRNA ligase, chloroplastic/mitochondrial.